A 103-amino-acid chain; its full sequence is Large ribosomal subunit protein bL21 (103 aa).

The protein belongs to the bacterial ribosomal protein bL21 family. Part of the 50S ribosomal subunit. Contacts protein L20.

Functionally, this protein binds to 23S rRNA in the presence of protein L20. This Bordetella avium (strain 197N) protein is Large ribosomal subunit protein bL21.